Here is a 392-residue protein sequence, read N- to C-terminus: [Phe13]-bombesin receptor (392 aa).

The Extracellular segment spans residues 1–40 (MPEGFQSLNQTLPSAISSIAHLESLNDSFILGAKQSEDVS). N-linked (GlcNAc...) asparagine glycosylation is found at N9 and N26. A helical transmembrane segment spans residues 41-62 (PGLEILALISVTYAVIISVGIL). Residues 63 to 81 (GNTILIKVFFKIKSMQTVP) lie on the Cytoplasmic side of the membrane. A helical membrane pass occupies residues 82–102 (NIFITSLAFGDLLLLLTCVPV). The Extracellular segment spans residues 103-120 (DASRYIVDTWMFGRAGCK). A disulfide bridge links C119 with C202. Residues 121-142 (IISFIQLTSVGVSVFTLTVLSA) traverse the membrane as a helical segment. Over 143 to 162 (DRYRAIVKPLQLQTSDAVLK) the chain is Cytoplasmic. A helical transmembrane segment spans residues 163-183 (TCGKAVCVWIISMLLAAPEAV). Residues 184 to 219 (FSDLYEFGSSEKNTTFEACAPYPVSEKILQETHSLI) lie on the Extracellular side of the membrane. Residues 220–240 (CFLVFYIVPLSIISAYYFLIA) traverse the membrane as a helical segment. Topologically, residues 241–271 (KTLYKSTFNMPAEEHTHARKQIESRKRVAKT) are cytoplasmic. A helical transmembrane segment spans residues 272-292 (VLVLVALFAVCWLPNHMLYLY). Residues 293–312 (RSFTYHSAVNSSAFHLSATI) are Extracellular-facing. The helical transmembrane segment at 313–332 (FARVLAFSNSCVNPFALYWL) threads the bilayer. The Cytoplasmic segment spans residues 333 to 392 (SRSFRQHFKKQVYCCKTEPPASQQSPTHSSTITGITAVKGNIQMSEISITLLSAYDVKKE). A lipid anchor (S-palmitoyl cysteine) is attached at C346.

Belongs to the G-protein coupled receptor 1 family. Expressed only in brain, primarily in cortex and forebrain and at low levels in the midbrain.

It is found in the cell membrane. Functionally, the relative rank potency of bombesin-like peptides for this receptor is [Phe13]bombesin &gt; [Leu13]bombesin &gt; GRP &gt; neuromedin-B. The polypeptide is [Phe13]-bombesin receptor (BB4) (Bombina orientalis (Oriental fire-bellied toad)).